The following is a 79-amino-acid chain: Small ribosomal subunit protein bS18 (79 aa).

Belongs to the bacterial ribosomal protein bS18 family. Part of the 30S ribosomal subunit. Forms a tight heterodimer with protein bS6.

Its function is as follows. Binds as a heterodimer with protein bS6 to the central domain of the 16S rRNA, where it helps stabilize the platform of the 30S subunit. The sequence is that of Small ribosomal subunit protein bS18 from Streptococcus agalactiae serotype Ia (strain ATCC 27591 / A909 / CDC SS700).